The following is a 510-amino-acid chain: ATP synthase subunit alpha (510 aa).

Position 169–176 (169–176 (GDRQTGKT)) interacts with ATP.

The protein belongs to the ATPase alpha/beta chains family. As to quaternary structure, F-type ATPases have 2 components, CF(1) - the catalytic core - and CF(0) - the membrane proton channel. CF(1) has five subunits: alpha(3), beta(3), gamma(1), delta(1), epsilon(1). CF(0) has three main subunits: a(1), b(2) and c(9-12). The alpha and beta chains form an alternating ring which encloses part of the gamma chain. CF(1) is attached to CF(0) by a central stalk formed by the gamma and epsilon chains, while a peripheral stalk is formed by the delta and b chains.

The protein resides in the cell inner membrane. The catalysed reaction is ATP + H2O + 4 H(+)(in) = ADP + phosphate + 5 H(+)(out). In terms of biological role, produces ATP from ADP in the presence of a proton gradient across the membrane. The alpha chain is a regulatory subunit. This Azorhizobium caulinodans (strain ATCC 43989 / DSM 5975 / JCM 20966 / LMG 6465 / NBRC 14845 / NCIMB 13405 / ORS 571) protein is ATP synthase subunit alpha.